A 162-amino-acid chain; its full sequence is Peptide methionine sulfoxide reductase MsrA (162 aa).

Cysteine 16 is a catalytic residue.

This sequence belongs to the MsrA Met sulfoxide reductase family.

It carries out the reaction L-methionyl-[protein] + [thioredoxin]-disulfide + H2O = L-methionyl-(S)-S-oxide-[protein] + [thioredoxin]-dithiol. It catalyses the reaction [thioredoxin]-disulfide + L-methionine + H2O = L-methionine (S)-S-oxide + [thioredoxin]-dithiol. Its function is as follows. Has an important function as a repair enzyme for proteins that have been inactivated by oxidation. Catalyzes the reversible oxidation-reduction of methionine sulfoxide in proteins to methionine. In Geobacter sulfurreducens (strain ATCC 51573 / DSM 12127 / PCA), this protein is Peptide methionine sulfoxide reductase MsrA.